A 366-amino-acid chain; its full sequence is Glutamate 5-kinase (366 aa).

Lys17 is an ATP binding site. Positions 57, 144, and 156 each coordinate substrate. Residues 176–177 and 216–222 contribute to the ATP site; these read SD and TGGMASK. Positions 278–352 constitute a PUA domain; sequence QGILHIDEGA…GKSTQELPAE (75 aa).

It belongs to the glutamate 5-kinase family.

It is found in the cytoplasm. It catalyses the reaction L-glutamate + ATP = L-glutamyl 5-phosphate + ADP. The protein operates within amino-acid biosynthesis; L-proline biosynthesis; L-glutamate 5-semialdehyde from L-glutamate: step 1/2. Catalyzes the transfer of a phosphate group to glutamate to form L-glutamate 5-phosphate. The polypeptide is Glutamate 5-kinase (Rhodococcus jostii (strain RHA1)).